We begin with the raw amino-acid sequence, 223 residues long: Thiamine-phosphate synthase (223 aa).

4-amino-2-methyl-5-(diphosphooxymethyl)pyrimidine is bound by residues 42-46 (QLRDK) and N83. D84 and D103 together coordinate Mg(2+). S122 contacts 4-amino-2-methyl-5-(diphosphooxymethyl)pyrimidine. Residue 148-150 (TPT) coordinates 2-[(2R,5Z)-2-carboxy-4-methylthiazol-5(2H)-ylidene]ethyl phosphate. K151 serves as a coordination point for 4-amino-2-methyl-5-(diphosphooxymethyl)pyrimidine. G179 lines the 2-[(2R,5Z)-2-carboxy-4-methylthiazol-5(2H)-ylidene]ethyl phosphate pocket.

It belongs to the thiamine-phosphate synthase family. The cofactor is Mg(2+).

The catalysed reaction is 2-[(2R,5Z)-2-carboxy-4-methylthiazol-5(2H)-ylidene]ethyl phosphate + 4-amino-2-methyl-5-(diphosphooxymethyl)pyrimidine + 2 H(+) = thiamine phosphate + CO2 + diphosphate. It catalyses the reaction 2-(2-carboxy-4-methylthiazol-5-yl)ethyl phosphate + 4-amino-2-methyl-5-(diphosphooxymethyl)pyrimidine + 2 H(+) = thiamine phosphate + CO2 + diphosphate. It carries out the reaction 4-methyl-5-(2-phosphooxyethyl)-thiazole + 4-amino-2-methyl-5-(diphosphooxymethyl)pyrimidine + H(+) = thiamine phosphate + diphosphate. It functions in the pathway cofactor biosynthesis; thiamine diphosphate biosynthesis; thiamine phosphate from 4-amino-2-methyl-5-diphosphomethylpyrimidine and 4-methyl-5-(2-phosphoethyl)-thiazole: step 1/1. Condenses 4-methyl-5-(beta-hydroxyethyl)thiazole monophosphate (THZ-P) and 2-methyl-4-amino-5-hydroxymethyl pyrimidine pyrophosphate (HMP-PP) to form thiamine monophosphate (TMP). The chain is Thiamine-phosphate synthase from Mycolicibacterium paratuberculosis (strain ATCC BAA-968 / K-10) (Mycobacterium paratuberculosis).